The following is a 166-amino-acid chain: Mitochondrial fission process protein 1 (166 aa).

The next 2 helical transmembrane spans lie at 34 to 54 and 78 to 98; these read SLVP…YVLA and ALAV…IPGF. Position 123 is an N6-succinyllysine (lysine 123). Residues 129–149 traverse the membrane as a helical segment; that stretch reads LGLLAIPVIIHPIDRSVDFLL.

This sequence belongs to the MTFP1 family.

The protein localises to the mitochondrion inner membrane. Involved in the mitochondrial division probably by regulating membrane fission. Loss-of-function leads to apoptosis. In Mus musculus (Mouse), this protein is Mitochondrial fission process protein 1 (Mtfp1).